Consider the following 945-residue polypeptide: Nonsense-mediated mRNA decay factor SMG8 (945 aa).

Disordered regions lie at residues 563–604 (RAEP…SANE) and 633–671 (AEAE…ERSA).

Belongs to the SMG8 family.

In terms of biological role, involved in nonsense-mediated decay (NMD) of mRNAs containing premature stop codons. Probable component of kinase complex containing nonC and recruited to stalled ribosomes. In Drosophila grimshawi (Hawaiian fruit fly), this protein is Nonsense-mediated mRNA decay factor SMG8.